The chain runs to 88 residues: UPF0250 protein Shal_3239 (88 aa).

The protein belongs to the UPF0250 family.

The sequence is that of UPF0250 protein Shal_3239 from Shewanella halifaxensis (strain HAW-EB4).